The chain runs to 1065 residues: WD repeat-containing protein on Y chromosome (1065 aa).

8 WD repeats span residues 153–197 (EEVT…IRTA), 326–365 (RVPL…EPSA), 369–408 (GHNG…LLQT), 459–498 (THAA…RKII), 511–550 (IIDI…VVRN), 598–638 (FHTD…RRYS), 745–784 (KTGD…VPEA), and 828–867 (AHLK…LGTL). Residues 915 to 925 (PAKRAEVKAPE) show a composition bias toward basic and acidic residues. Disordered regions lie at residues 915 to 936 (PAKR…QTDD) and 1024 to 1065 (GSAL…QQSE). The segment covering 926–936 (DRDEETAQTDD) has biased composition (acidic residues).

The chain is WD repeat-containing protein on Y chromosome from Drosophila persimilis (Fruit fly).